We begin with the raw amino-acid sequence, 125 residues long: uncharacterized protein (125 aa).

2 consecutive transmembrane segments (helical) span residues 28–48 (VFITHLFFLLHSLLLFLSQFC) and 54–74 (FFLPTINLVTHSIKFITLFFF).

The protein resides in the membrane. This is an uncharacterized protein from Saccharomyces cerevisiae (strain ATCC 204508 / S288c) (Baker's yeast).